The following is a 177-amino-acid chain: Putative HTH-type transcriptional regulator YvaV (177 aa).

A DNA-binding region (H-T-H motif) is located at residues Leu-49 to Ala-73.

It belongs to the GbsR family.

This is Putative HTH-type transcriptional regulator YvaV (yvaV) from Bacillus subtilis (strain 168).